The sequence spans 456 residues: NAD-dependent deacetylase sir2C (456 aa).

The Deacetylase sirtuin-type domain occupies 161–443 (IEIENNKIKE…LNLSKLLNWD (283 aa)). H294 acts as the Proton acceptor in catalysis. The Zn(2+) site is built by C302, C305, C331, and C336.

The protein belongs to the sirtuin family. It depends on Zn(2+) as a cofactor.

The catalysed reaction is N(6)-acetyl-L-lysyl-[protein] + NAD(+) + H2O = 2''-O-acetyl-ADP-D-ribose + nicotinamide + L-lysyl-[protein]. In terms of biological role, NAD-dependent deacetylase, which plays an important role in the regulation of transcriptional repression. The polypeptide is NAD-dependent deacetylase sir2C (sir2C) (Dictyostelium discoideum (Social amoeba)).